The chain runs to 101 residues: NADH-quinone oxidoreductase subunit K (101 aa).

Transmembrane regions (helical) follow at residues 4–24 (LSHYLVLGAILFAISVVGIFL), 30–50 (IVLLMAIELMLLAVNLNFIAF), and 61–81 (IFVFFILTVAAAESAIGLAIL).

It belongs to the complex I subunit 4L family. In terms of assembly, NDH-1 is composed of 14 different subunits. Subunits NuoA, H, J, K, L, M, N constitute the membrane sector of the complex.

Its subcellular location is the cell inner membrane. The catalysed reaction is a quinone + NADH + 5 H(+)(in) = a quinol + NAD(+) + 4 H(+)(out). NDH-1 shuttles electrons from NADH, via FMN and iron-sulfur (Fe-S) centers, to quinones in the respiratory chain. The immediate electron acceptor for the enzyme in this species is believed to be ubiquinone. Couples the redox reaction to proton translocation (for every two electrons transferred, four hydrogen ions are translocated across the cytoplasmic membrane), and thus conserves the redox energy in a proton gradient. The polypeptide is NADH-quinone oxidoreductase subunit K (Aromatoleum aromaticum (strain DSM 19018 / LMG 30748 / EbN1) (Azoarcus sp. (strain EbN1))).